Reading from the N-terminus, the 417-residue chain is NADH-quinone oxidoreductase subunit D (417 aa).

Belongs to the complex I 49 kDa subunit family. In terms of assembly, NDH-1 is composed of 14 different subunits. Subunits NuoB, C, D, E, F, and G constitute the peripheral sector of the complex.

Its subcellular location is the cell inner membrane. The enzyme catalyses a quinone + NADH + 5 H(+)(in) = a quinol + NAD(+) + 4 H(+)(out). Functionally, NDH-1 shuttles electrons from NADH, via FMN and iron-sulfur (Fe-S) centers, to quinones in the respiratory chain. The immediate electron acceptor for the enzyme in this species is believed to be ubiquinone. Couples the redox reaction to proton translocation (for every two electrons transferred, four hydrogen ions are translocated across the cytoplasmic membrane), and thus conserves the redox energy in a proton gradient. This chain is NADH-quinone oxidoreductase subunit D, found in Burkholderia lata (strain ATCC 17760 / DSM 23089 / LMG 22485 / NCIMB 9086 / R18194 / 383).